Consider the following 462-residue polypeptide: Bindin (462 aa).

Residues 1–19 (MARQLSVILVALTLTTALA) form the signal peptide. A propeptide spanning residues 20–244 (ENFPTRTSAP…DSGRSARKKR (225 aa)) is cleaved from the precursor. 2 disordered regions span residues 155–194 (DDRR…APKD) and 221–278 (RTRR…QGMG). Residues 372-380 (LRHLRHHSN) form a fucose-binding domain region.

Belongs to the bindin family.

It is found in the cytoplasmic vesicle. It localises to the secretory vesicle. The protein resides in the acrosome lumen. Functionally, species-specific sea urchin sperm protein required for adhesion of sperm to the egg surface during fertilization. Bindin coats the acrosomal process after it is externalized by the acrosome reaction. It binds to sulfated, fucose-containing polysaccharides on the vitelline layer receptor proteoglycans which cover the egg plasma membrane. This is Bindin from Lytechinus variegatus (Green sea urchin).